Reading from the N-terminus, the 290-residue chain is UPF0761 membrane protein YihY (290 aa).

6 helical membrane passes run 44–64 (LLSL…FPMF), 104–124 (VGAC…DSAL), 140–160 (FAVY…SLAI), 183–203 (IFPL…VPTI), 210–230 (AIVG…GFAL), and 244–264 (VLAV…IVLL).

It belongs to the UPF0761 family.

The protein localises to the cell inner membrane. The sequence is that of UPF0761 membrane protein YihY from Escherichia coli O7:K1 (strain IAI39 / ExPEC).